The primary structure comprises 85 residues: Selenoprotein W (85 aa).

The cysteinyl-selenocysteine (Cys-Sec); redox-active cross-link spans 10 to 13 (CGAU). A non-standard amino acid (selenocysteine) is located at residue selenocysteine 13.

This sequence belongs to the SelWTH family. Selenoprotein W subfamily. As to expression, expressed ubiquitously with predominant expression in the pituitary, spinal cord, sciatic nerve, cerebral cortex, cerebral nuclei, thalamus, cerebellum, muscle, cartilage, trachea, gizzard and artery. Weakly expressed in pancreas, testis, ovary, kidney and veins.

Its subcellular location is the cytoplasm. In terms of biological role, plays a role as a glutathione (GSH)-dependent antioxidant. May be involved in a redox-related process. May play a role in the myopathies of selenium deficiency. This chain is Selenoprotein W, found in Gallus gallus (Chicken).